Reading from the N-terminus, the 302-residue chain is D-alanine--D-alanine ligase (302 aa).

Positions 99–298 constitute an ATP-grasp domain; that stretch reads KRLFVAEGIP…FEQLIQRIID (200 aa). Position 128 to 183 (128 to 183) interacts with ATP; it reads LAALGSPVVVKPADGGSTVGVTIAREAGHLPEAVRLALQYSPQVLIEQYIPGQEIT. Mg(2+) contacts are provided by aspartate 252, glutamate 265, and asparagine 267.

This sequence belongs to the D-alanine--D-alanine ligase family. It depends on Mg(2+) as a cofactor. Mn(2+) serves as cofactor.

The protein localises to the cytoplasm. It catalyses the reaction 2 D-alanine + ATP = D-alanyl-D-alanine + ADP + phosphate + H(+). The protein operates within cell wall biogenesis; peptidoglycan biosynthesis. Cell wall formation. This Gloeobacter violaceus (strain ATCC 29082 / PCC 7421) protein is D-alanine--D-alanine ligase.